A 748-amino-acid chain; its full sequence is Polyribonucleotide nucleotidyltransferase (748 aa).

Mg(2+) contacts are provided by Asp484 and Asp490. The 60-residue stretch at 551-610 folds into the KH domain; it reads PRIETMSVPKDKIRDVIGTGGKVIREIVATTGAKVDIEDDGTVRLSSSDPANIEAAREWI. The S1 motif domain maps to 620 to 688; it reads GKIYNGKVVN…NRGKVRLSMR (69 aa). The segment at 693–748 is disordered; that stretch reads ETGAELDDNRPPRENAERRGGERPRRDRGPRRESGDRPARRDMEPEFAPAFLRKDS. The segment covering 699-736 has biased composition (basic and acidic residues); that stretch reads DDNRPPRENAERRGGERPRRDRGPRRESGDRPARRDME.

It belongs to the polyribonucleotide nucleotidyltransferase family. It depends on Mg(2+) as a cofactor.

It is found in the cytoplasm. The enzyme catalyses RNA(n+1) + phosphate = RNA(n) + a ribonucleoside 5'-diphosphate. Functionally, involved in mRNA degradation. Catalyzes the phosphorolysis of single-stranded polyribonucleotides processively in the 3'- to 5'-direction. This is Polyribonucleotide nucleotidyltransferase from Zymomonas mobilis subsp. mobilis (strain ATCC 31821 / ZM4 / CP4).